Here is a 100-residue protein sequence, read N- to C-terminus: Apolipoprotein C-II (100 aa).

Positions 1–25 are cleaved as a signal peptide; the sequence is MDARSLLLLWLLLPLLLLLGCEVQG. Residues 65-73 are lipid binding; that stretch reads AVDETIRDI. Positions 77-100 are lipoprotein lipase cofactor; the sequence is GSAAISTYTGILTDQILTMLQGKQ.

It belongs to the apolipoprotein C2 family. Post-translationally, proapolipoprotein C-II is synthesized as a sialic acid containing glycoprotein which is subsequently desialylated prior to its proteolytic processing. Proapolipoprotein C-II, the major form found in plasma undergoes proteolytic cleavage of its N-terminal hexapeptide to generate apolipoprotein C-II, which occurs as the minor form in plasma. Liver.

It is found in the secreted. Component of chylomicrons, very low-density lipoproteins (VLDL), low-density lipoproteins (LDL), and high-density lipoproteins (HDL) in plasma. Plays an important role in lipoprotein metabolism as an activator of lipoprotein lipase. Both proapolipoprotein C-II and apolipoprotein C-II can activate lipoprotein lipase. The protein is Apolipoprotein C-II (APOC2) of Cavia porcellus (Guinea pig).